The sequence spans 832 residues: FAST kinase domain-containing protein 1, mitochondrial (832 aa).

The region spanning 765–825 (VAIEFLDSKA…KDAWIDYLRK (61 aa)) is the RAP domain.

It belongs to the FAST kinase family.

Its subcellular location is the mitochondrion. May regulate the stability of some mitochondrial mRNA species. This is FAST kinase domain-containing protein 1, mitochondrial (fastkd1) from Xenopus tropicalis (Western clawed frog).